A 206-amino-acid chain; its full sequence is Small ribosomal subunit protein eS1 (206 aa).

Belongs to the eukaryotic ribosomal protein eS1 family.

The polypeptide is Small ribosomal subunit protein eS1 (Halobacterium salinarum (strain ATCC 29341 / DSM 671 / R1)).